We begin with the raw amino-acid sequence, 303 residues long: uncharacterized protein (303 aa).

In terms of domain architecture, Fe2OG dioxygenase spans 173–300; the sequence is KLPELLGQLN…RFTVNGWIRK (128 aa).

Requires Fe(2+) as cofactor. It depends on L-ascorbate as a cofactor.

This is an uncharacterized protein from Synechocystis sp. (strain ATCC 27184 / PCC 6803 / Kazusa).